A 385-amino-acid chain; its full sequence is 1-deoxy-D-xylulose 5-phosphate reductoisomerase (385 aa).

NADPH is bound by residues Thr10, Gly11, Ser12, Ile13, Gly36, Asn38, and Asn122. Lys123 contributes to the 1-deoxy-D-xylulose 5-phosphate binding site. NADPH is bound at residue Glu124. Asp148 is a Mn(2+) binding site. Residues Ser149, Glu150, Ser174, and His197 each contribute to the 1-deoxy-D-xylulose 5-phosphate site. Position 150 (Glu150) interacts with Mn(2+). Gly203 provides a ligand contact to NADPH. 1-deoxy-D-xylulose 5-phosphate contacts are provided by Ser210, Asn215, Lys216, and Glu219. Mn(2+) is bound at residue Glu219.

It belongs to the DXR family. Requires Mg(2+) as cofactor. Mn(2+) is required as a cofactor.

It catalyses the reaction 2-C-methyl-D-erythritol 4-phosphate + NADP(+) = 1-deoxy-D-xylulose 5-phosphate + NADPH + H(+). Its pathway is isoprenoid biosynthesis; isopentenyl diphosphate biosynthesis via DXP pathway; isopentenyl diphosphate from 1-deoxy-D-xylulose 5-phosphate: step 1/6. In terms of biological role, catalyzes the NADPH-dependent rearrangement and reduction of 1-deoxy-D-xylulose-5-phosphate (DXP) to 2-C-methyl-D-erythritol 4-phosphate (MEP). In Geobacter sp. (strain M21), this protein is 1-deoxy-D-xylulose 5-phosphate reductoisomerase.